The primary structure comprises 64 residues: Large ribosomal subunit protein uL30 (64 aa).

It belongs to the universal ribosomal protein uL30 family. Part of the 50S ribosomal subunit.

This Beijerinckia indica subsp. indica (strain ATCC 9039 / DSM 1715 / NCIMB 8712) protein is Large ribosomal subunit protein uL30.